The chain runs to 67 residues: Kappa-conotoxin-like 2 (67 aa).

The N-terminal stretch at 1–26 is a signal peptide; sequence MMFRLTSVSCFLLVIACLNLFQVVLT. Cystine bridges form between Cys-29/Cys-43, Cys-36/Cys-48, Cys-42/Cys-51, and Cys-47/Cys-55. Phe-59 bears the Phenylalanine amide mark. The propeptide occupies 63–67; the sequence is ATFQE.

This sequence belongs to the conotoxin I2 superfamily. Expressed by the venom duct.

It is found in the secreted. Its function is as follows. Inhibits the vertebrate voltage-gated potassium channels Kv1.1/KCNA1 and Kv1.3/KCNA3. This chain is Kappa-conotoxin-like 2, found in Conus vexillum (Flag cone).